A 247-amino-acid chain; its full sequence is Exosome complex component Rrp4 (247 aa).

The S1 motif domain maps to 75-148 (DDLVIGIVEN…RDPVITVKGK (74 aa)). Residues 154–220 (TEGVVVDVKP…QAIKLIELKA (67 aa)) form the KH domain.

Belongs to the RRP4 family. As to quaternary structure, component of the archaeal exosome complex. Forms a trimer of Rrp4 and/or Csl4 subunits. The trimer associates with a hexameric ring-like arrangement composed of 3 Rrp41-Rrp42 heterodimers.

The protein localises to the cytoplasm. Non-catalytic component of the exosome, which is a complex involved in RNA degradation. Increases the RNA binding and the efficiency of RNA degradation. Confers strong poly(A) specificity to the exosome. In Thermosphaera aggregans (strain DSM 11486 / M11TL), this protein is Exosome complex component Rrp4.